The primary structure comprises 534 residues: Protein tweety homolog 2 (534 aa).

Residues 1–44 are Extracellular-facing; the sequence is MAAARVEYIAPWWVYWLHNFPHVDLSLRQKSPDFNPKDPGYQQT. A helical transmembrane segment spans residues 45–65; it reads LLFVALIVALCAAVNLLFVSV. At 66 to 87 the chain is on the cytoplasmic side; the sequence is YLICLCCCKKEDETETKKTSSC. The helical transmembrane segment at 88–108 threads the bilayer; sequence CVTWTAAVSGLLCCAAVGIGF. Topologically, residues 109 to 213 are extracellular; that stretch reads YGNSETNDGV…QTSTIEYYRW (105 aa). Ca(2+)-binding residues include E113 and D116. N129 carries N-linked (GlcNAc...) asparagine glycosylation. The short motif at 164–166 is the RGD element; it reads RGD. N197 carries N-linked (GlcNAc...) asparagine glycosylation. A helical transmembrane segment spans residues 214–234; the sequence is LSYLLLFISYVVICLVTCVGL. The Cytoplasmic portion of the chain corresponds to 235 to 240; the sequence is AKKSKC. The chain crosses the membrane as a helical span at residues 241–261; it reads LLLIMLCFGLIALMLSWTSLA. The Extracellular portion of the chain corresponds to 262 to 388; sequence LETSSAMGTS…IGICYDGVEG (127 aa). 2 disulfide bridges follow: C274-C382 and C300-C367. N283 and N352 each carry an N-linked (GlcNAc...) asparagine glycan. Residues 389-409 traverse the membrane as a helical segment; it reads MLYLGLFSLLAALAFTAMVCA. Over 410 to 534 the chain is Cytoplasmic; the sequence is MPQAWKHLEA…SSIYSNVFPA (125 aa).

It belongs to the tweety family. As to quaternary structure, forms cis-homodimers in the presence of Ca(+2) and forms monomers and trans-dimers in the absence of Ca(2+).

Its subcellular location is the cell membrane. It carries out the reaction chloride(in) = chloride(out). The enzyme catalyses L-glutamate(out) = L-glutamate(in). May act as a calcium-independent, swelling-dependent volume-regulated anion channel (VRAC-swell) which plays a pivotal role in the process of regulatory volume decrease (RVD) in the brain through the efflux of anions like chloride and organic osmolytes like glutamate. Probable large-conductance Ca(2+)-activated chloride channel. The sequence is that of Protein tweety homolog 2 (ttyh2) from Xenopus tropicalis (Western clawed frog).